Consider the following 264-residue polypeptide: Nuclear egress protein 1 (264 aa).

Basic residues predominate over residues 1 to 12 (MTVHKSRIRRSR). The segment at 1–22 (MTVHKSRIRRSRSLSVTHRIQK) is disordered. The segment at 83–187 (CLEFSPYANE…HIVFQSRTLH (105 aa)) adopts a CCCH-type zinc-finger fold.

It belongs to the herpesviridae NEC1 protein family. As to quaternary structure, forms a heterohexameric complex with NEC2. Interacts with capsid vertex specific component 2/CVC2; this interaction directs the capsid to the host inner nuclear membrane to initiate budding. In terms of processing, phosphorylated at serine residues in the N-terminus. This phosphorylation regulates the localization within the inner nuclear membrane.

Its subcellular location is the host nucleus inner membrane. Plays an essential role in virion nuclear egress, the first step of virion release from infected cell. Within the host nucleus, NEC1 interacts with the newly formed capsid through the vertexes and directs it to the inner nuclear membrane by associating with NEC2. Induces the budding of the capsid at the inner nuclear membrane as well as its envelopment into the perinuclear space. There, the NEC1/NEC2 complex promotes the fusion of the enveloped capsid with the outer nuclear membrane and the subsequent release of the viral capsid into the cytoplasm where it will reach the secondary budding sites in the host Golgi or trans-Golgi network. This is Nuclear egress protein 1 from Human herpesvirus 6A (strain Uganda-1102) (HHV-6 variant A).